The following is a 66-amino-acid chain: Beta-mammal toxin Cv5 (66 aa).

Residues 1 to 66 (KEGYIVNYYD…VWPLPKKKCN (66 aa)) form the LCN-type CS-alpha/beta domain. Cystine bridges form between Cys-12/Cys-65, Cys-16/Cys-41, Cys-25/Cys-46, and Cys-29/Cys-48.

As to expression, expressed by the venom gland.

The protein localises to the secreted. Its activity is regulated as follows. Is susceptible to be neutralized by human antibodies scFvs 10FG2 and HV. Beta toxins bind voltage-independently at site-4 of sodium channels (Nav) and reduces peak current and shifts the voltage of activation toward more negative potentials thereby affecting sodium channel activation and promoting spontaneous and repetitive firing. This toxin is moderately toxic to mice. This is Beta-mammal toxin Cv5 from Centruroides villegasi (Scorpion).